Reading from the N-terminus, the 142-residue chain is MGASSLPPAWQLYLKDHRISTFKNWPFLEGCACTPERMAEAGFIHCPTENEPDLAQCFFCFKELEGWEPDDDPIEEHKKHSSGCAFLSVKKQFEELTLSEFLKLDKERAKNKIAKETNHKQKEFEETAKRVRCAIEQLAALE.

A BIR repeat occupies 18–88 (RISTFKNWPF…KHSSGCAFLS (71 aa)). Position 20 is a phosphoserine; by AURKC (Ser20). Lys23 is modified (N6-acetyllysine). Thr34 bears the Phosphothreonine; by CDK1 and CDK15 mark. The residue at position 48 (Thr48) is a Phosphothreonine. Positions 57, 60, 77, and 84 each coordinate Zn(2+). N6-acetyllysine is present on residues Lys90, Lys110, Lys112, and Lys115. Thr117 is subject to Phosphothreonine; by AURKB. The residue at position 129 (Lys129) is an N6-acetyllysine.

Belongs to the IAP family. Monomer or homodimer. Exists as a homodimer in the apo state and as a monomer in the CPC-bound state. The monomer protects cells against apoptosis more efficiently than the dimer. Only the dimeric form is capable of enhancing tubulin stability in cells. When phosphorylated, interacts with LAMTOR5/HBXIP; the resulting complex binds pro-CASP9, as well as active CASP9, but much less efficiently. Component of the chromosomal passenger complex (CPC) composed of at least BIRC5/survivin, CDCA8/borealin, INCENP, AURKB or AURKC; in the complex forms a triple-helix bundle-based subcomplex with INCENP and CDCA8. Interacts with JTB. Interacts (via BIR domain) with histone H3 phosphorylated at 'Thr-3' (H3pT3). Interacts with EVI5. Interacts with GTP-bound RAN in both the S and M phases of the cell cycle. Interacts with USP9X. Interacts with tubulin. Interacts with BIRC2/c-IAP1. The acetylated form at Lys-129 interacts with STAT3. The monomeric form deacetylated at Lys-129 interacts with XPO1/CRM1. The monomeric form interacts with XIAP/BIRC4. Both the dimeric and monomeric form can interact with DIABLO/SMAC. Interacts with BIRC6/bruce. Interacts with FBXL7; this interaction facilitates the polyubiquitination and subsequent proteasomal degradation of BIRC5 by the SCF(FBXL7) E3 ubiquitin-protein ligase complex. Ubiquitinated by the Cul9-RING ubiquitin-protein ligase complex, leading to its degradation. Ubiquitination is required for centrosomal targeting. Deubiquitinated by USP35 or USP38; leading to stabilization. In terms of processing, acetylation at Lys-129 results in its homodimerization, while deacetylation promotes the formation of monomers which heterodimerize with XPO1/CRM1 which facilitates its nuclear export. The acetylated form represses STAT3 transactivation. The dynamic equilibrium between its acetylation and deacetylation at Lys-129 determines its interaction with XPO1/CRM1, its subsequent subcellular localization, and its ability to inhibit STAT3 transactivation. Post-translationally, in vitro phosphorylation at Thr-117 by AURKB prevents interaction with INCENP and localization to mitotic chromosomes. Phosphorylation at Thr-48 by CK2 is critical for its mitotic and anti-apoptotic activities. Phosphorylation at Thr-34 by CDK15 is critical for its anti-apoptotic activity. Phosphorylation at Ser-20 by AURKC is critical for regulation of proper chromosome alignment and segregation, and possibly cytokinesis.

The protein localises to the cytoplasm. It localises to the nucleus. The protein resides in the chromosome. Its subcellular location is the centromere. It is found in the cytoskeleton. The protein localises to the spindle. It localises to the kinetochore. The protein resides in the midbody. Multitasking protein that has dual roles in promoting cell proliferation and preventing apoptosis. Component of a chromosome passage protein complex (CPC) which is essential for chromosome alignment and segregation during mitosis and cytokinesis. Acts as an important regulator of the localization of this complex; directs CPC movement to different locations from the inner centromere during prometaphase to midbody during cytokinesis and participates in the organization of the center spindle by associating with polymerized microtubules. Involved in the recruitment of CPC to centromeres during early mitosis via association with histone H3 phosphorylated at 'Thr-3' (H3pT3) during mitosis. The complex with RAN plays a role in mitotic spindle formation by serving as a physical scaffold to help deliver the RAN effector molecule TPX2 to microtubules. May counteract a default induction of apoptosis in G2/M phase. The acetylated form represses STAT3 transactivation of target gene promoters. May play a role in neoplasia. Inhibitor of CASP3 and CASP7. Essential for the maintenance of mitochondrial integrity and function. This Felis catus (Cat) protein is Baculoviral IAP repeat-containing protein 5 (BIRC5).